The sequence spans 118 residues: Large ribosomal subunit protein bL20 (118 aa).

Belongs to the bacterial ribosomal protein bL20 family.

In terms of biological role, binds directly to 23S ribosomal RNA and is necessary for the in vitro assembly process of the 50S ribosomal subunit. It is not involved in the protein synthesizing functions of that subunit. The sequence is that of Large ribosomal subunit protein bL20 from Staphylococcus epidermidis (strain ATCC 35984 / DSM 28319 / BCRC 17069 / CCUG 31568 / BM 3577 / RP62A).